Reading from the N-terminus, the 614-residue chain is Autophagy-related protein 22-1 (614 aa).

Residues 1–29 (MQNCTNSPEDQAASVCPPPPQFPGDDTRP) form a disordered region. An N-linked (GlcNAc...) asparagine glycan is attached at Asn3. The next 4 helical transmembrane spans lie at 41 to 61 (YGWAAEVFTVCAMGSFLPITL), 126 to 146 (TASFAMYTFSLSVFIQAILII), 160 to 180 (MLLVIFALIGSVSTMLFLAVV), and 185 to 205 (LLGGLFAIISNTCFGASFVLL). The tract at residues 229–254 (PTGTSHDSTSTADGPGQTDGTETTSL) is disordered. Polar residues predominate over residues 230–254 (TGTSHDSTSTADGPGQTDGTETTSL). The next 8 helical transmembrane spans lie at 291–311 (GIGIGYIGAVILQAICILVVV), 322–342 (LVLFLIGLWWFTFTIPAAMWL), 383–403 (ILLFLAAWFLLSDGIATVSGT), 417–437 (AALGLINVIAMIAGVFGAFSW), 452–472 (IVACIILFELVPLYGLLGFIP), 486–506 (WEMYPLGVIYGLVMGGLSSYC), 523–545 (YALYAITDKGSSVFGPAIVGIIT), and 554–574 (AFVFLAVLILLPLPLMLLVDV).

It belongs to the ATG22 family.

Its subcellular location is the vacuole membrane. Its function is as follows. Vacuolar effluxer which mediate the efflux of amino acids resulting from autophagic degradation. The release of autophagic amino acids allows the maintenance of protein synthesis and viability during nitrogen starvation. This chain is Autophagy-related protein 22-1 (atg22-1), found in Aspergillus niger (strain ATCC MYA-4892 / CBS 513.88 / FGSC A1513).